The chain runs to 248 residues: MKFTLVGNGRMGREVAAVISRSGIHETAAVLDVDAKITPDSFRGSDAIIDFTVRDAFLQNLDAMLASGVPVVAGTTGWDDVRAGVASKVKAAGGSLLYSANFSLGVNIFLRTVREASRLIAPFEQFDIAFSEQHHTAKADFPSGTALAAAEHILAANSRKHSIVRQLPDGRKIQPDELQVAAIRLGGVFGKHTAFIDSEADEIVISHTAKNRSGFASGAVETAAWLALRHKTAPGFYTMDDFLNERLA.

NAD(+) is bound by residues Asp-32, 74-76 (GTT), and 99-102 (SANF). His-134 (proton donor/acceptor) is an active-site residue. His-135 serves as a coordination point for (S)-2,3,4,5-tetrahydrodipicolinate. Lys-138 serves as the catalytic Proton donor. 144–145 (GT) contacts (S)-2,3,4,5-tetrahydrodipicolinate.

This sequence belongs to the DapB family.

Its subcellular location is the cytoplasm. It carries out the reaction (S)-2,3,4,5-tetrahydrodipicolinate + NAD(+) + H2O = (2S,4S)-4-hydroxy-2,3,4,5-tetrahydrodipicolinate + NADH + H(+). It catalyses the reaction (S)-2,3,4,5-tetrahydrodipicolinate + NADP(+) + H2O = (2S,4S)-4-hydroxy-2,3,4,5-tetrahydrodipicolinate + NADPH + H(+). It participates in amino-acid biosynthesis; L-lysine biosynthesis via DAP pathway; (S)-tetrahydrodipicolinate from L-aspartate: step 4/4. Catalyzes the conversion of 4-hydroxy-tetrahydrodipicolinate (HTPA) to tetrahydrodipicolinate. In Chlorobium luteolum (strain DSM 273 / BCRC 81028 / 2530) (Pelodictyon luteolum), this protein is 4-hydroxy-tetrahydrodipicolinate reductase.